A 512-amino-acid polypeptide reads, in one-letter code: Ribose import ATP-binding protein RbsA (512 aa).

2 consecutive ABC transporter domains span residues 6–242 (LELR…VNRE) and 252–496 (VPAG…TGAQ). ATP is bound at residue 38 to 45 (GENGAGKS).

This sequence belongs to the ABC transporter superfamily. Ribose importer (TC 3.A.1.2.1) family. The complex is composed of an ATP-binding protein (RbsA), two transmembrane proteins (RbsC) and a solute-binding protein (RbsB).

It localises to the cell inner membrane. It catalyses the reaction D-ribose(out) + ATP + H2O = D-ribose(in) + ADP + phosphate + H(+). Part of the ABC transporter complex RbsABC involved in ribose import. Responsible for energy coupling to the transport system. This Pseudomonas putida (strain ATCC 47054 / DSM 6125 / CFBP 8728 / NCIMB 11950 / KT2440) protein is Ribose import ATP-binding protein RbsA.